Consider the following 115-residue polypeptide: Class I hydrophobin C (115 aa).

A signal peptide spans 1 to 19; the sequence is MFSRVLVAALVALPVLVSA. Intrachain disulfides connect Cys-36/Cys-93, Cys-43/Cys-87, Cys-44/Cys-74, and Cys-94/Cys-108.

Belongs to the fungal hydrophobin family. Self-assembles to form functional amyloid fibrils called rodlets. Self-assembly into fibrillar rodlets occurs spontaneously at hydrophobic:hydrophilic interfaces and the rodlets further associate laterally to form amphipathic monolayers.

The protein resides in the secreted. It localises to the cell wall. In terms of biological role, aerial growth, conidiation, and dispersal of filamentous fungi in the environment rely upon a capability of their secreting small amphipathic proteins called hydrophobins (HPBs) with low sequence identity. Class I can self-assemble into an outermost layer of rodlet bundles on aerial cell surfaces, conferring cellular hydrophobicity that supports fungal growth, development and dispersal; whereas Class II form highly ordered films at water-air interfaces through intermolecular interactions but contribute nothing to the rodlet structure. This chain is Class I hydrophobin C, found in Agaricus bisporus (White button mushroom).